We begin with the raw amino-acid sequence, 290 residues long: Carbonic anhydrase-related protein (290 aa).

A disordered region spans residues 1 to 26; it reads MADLSFIEDTVAFPEKEEDEEEEEEG. At S5 the chain carries Phosphoserine. Over residues 16 to 26 the composition is skewed to acidic residues; that stretch reads KEEDEEEEEEG. The Alpha-carbonic anhydrase domain maps to 27–289; it reads VEWGYEEGVE…LSDRVIRAAF (263 aa). Catalysis depends on H87, which acts as the Proton donor/acceptor. Residues H118 and H141 each contribute to the Zn(2+) site.

The protein belongs to the alpha-carbonic anhydrase family.

Its function is as follows. Does not have a carbonic anhydrase catalytic activity. In Homo sapiens (Human), this protein is Carbonic anhydrase-related protein (CA8).